We begin with the raw amino-acid sequence, 296 residues long: Chronophin (296 aa).

The active-site Nucleophile is the D25. The Mg(2+) site is built by D25 and N27. The active-site Proton donor is N27. Substrate contacts are provided by residues 58-60, H182, and K213; that span reads SNN. Position 238 (D238) interacts with Mg(2+).

The protein belongs to the HAD-like hydrolase superfamily. As to quaternary structure, homodimer. The cofactor is Mg(2+). Detected in brain (at protein level).

The protein localises to the cytoplasm. It is found in the cytosol. Its subcellular location is the cytoskeleton. It localises to the cell projection. The protein resides in the ruffle membrane. The protein localises to the lamellipodium membrane. It is found in the cell membrane. The catalysed reaction is pyridoxal 5'-phosphate + H2O = pyridoxal + phosphate. It carries out the reaction pyridoxine 5'-phosphate + H2O = pyridoxine + phosphate. The enzyme catalyses pyridoxamine + phosphate = pyridoxamine 5'-phosphate + H2O. It catalyses the reaction O-phospho-L-seryl-[protein] + H2O = L-seryl-[protein] + phosphate. In terms of biological role, functions as a pyridoxal phosphate (PLP) phosphatase, which also catalyzes the dephosphorylation of pyridoxine 5'-phosphate (PNP) and pyridoxamine 5'-phosphate (PMP), with order of substrate preference PLP &gt; PNP &gt; PMP and therefore plays a role in vitamin B6 metabolism. Also functions as a protein serine phosphatase that specifically dephosphorylates 'Ser-3' in proteins of the actin-depolymerizing factor (ADF)/cofilin family like CFL1 and DSTN. Thereby, regulates cofilin-dependent actin cytoskeleton reorganization, being required for normal progress through mitosis and normal cytokinesis. Does not dephosphorylate phosphothreonines in LIMK1. Does not dephosphorylate peptides containing phosphotyrosine. The sequence is that of Chronophin from Bos taurus (Bovine).